A 391-amino-acid chain; its full sequence is Transmembrane protein 79 (391 aa).

Residues 1–114 form a disordered region; it reads MTEPETLALL…TKSEEPFKED (114 aa). The Cytoplasmic segment spans residues 1–200; the sequence is MTEPETLALL…GREALRAVAS (200 aa). Residues 103 to 114 are compositionally biased toward basic and acidic residues; the sequence is APTKSEEPFKED. A helical membrane pass occupies residues 201–221; sequence VVAALIFFPCLLYGAYAFLPF. Over 222–240 the chain is Extracellular; it reads DAPRLPTMSSRLVYTLRCG. Residues 241 to 261 traverse the membrane as a helical segment; the sequence is VFATFPIVLGLLVYGLSLLCF. At 262–279 the chain is on the cytoplasmic side; sequence SALRPFGEPRREVEIHRQ. The chain crosses the membrane as a helical span at residues 280 to 300; that stretch reads YVAQSVQLFILYFFNLAVLST. Residues 301–309 are Extracellular-facing; the sequence is YLPQDTLKL. The chain crosses the membrane as a helical span at residues 310-330; the sequence is LPLLTGLFAISRLIYWLTFAV. Topologically, residues 331-339 are cytoplasmic; that stretch reads GRSFRGFGY. The chain crosses the membrane as a helical span at residues 340 to 360; sequence GLTFLPLLAMLVWNLYYMFVV. Residues 361–391 lie on the Extracellular side of the membrane; that stretch reads EPERMLTASESRLDYPDHARSVSDYRPRSWG.

In terms of tissue distribution, expressed in the epidermis of the skin. Expressed in epithelial cells of the outermost layer of the stratum granulosum (SG) and in hair follicles (at protein level).

Its subcellular location is the lysosome. The protein resides in the golgi apparatus. It is found in the trans-Golgi network. It localises to the membrane. Functionally, contributes to the epidermal integrity and skin barrier function. Plays a role in the lamellar granule (LG) secretory system and in the stratum corneum (SC) epithelial cell formation. This chain is Transmembrane protein 79 (Tmem79), found in Mus musculus (Mouse).